The primary structure comprises 278 residues: 4-hydroxy-tetrahydrodipicolinate reductase (278 aa).

NAD(+) is bound by residues 13–18 and 111–113; these read GAAGKM and GTT. His167 acts as the Proton donor/acceptor in catalysis. His168 contributes to the (S)-2,3,4,5-tetrahydrodipicolinate binding site. The Proton donor role is filled by Lys171. 177–178 is a binding site for (S)-2,3,4,5-tetrahydrodipicolinate; sequence GT.

The protein belongs to the DapB family.

The protein resides in the cytoplasm. The enzyme catalyses (S)-2,3,4,5-tetrahydrodipicolinate + NAD(+) + H2O = (2S,4S)-4-hydroxy-2,3,4,5-tetrahydrodipicolinate + NADH + H(+). It carries out the reaction (S)-2,3,4,5-tetrahydrodipicolinate + NADP(+) + H2O = (2S,4S)-4-hydroxy-2,3,4,5-tetrahydrodipicolinate + NADPH + H(+). The protein operates within amino-acid biosynthesis; L-lysine biosynthesis via DAP pathway; (S)-tetrahydrodipicolinate from L-aspartate: step 4/4. Functionally, catalyzes the conversion of 4-hydroxy-tetrahydrodipicolinate (HTPA) to tetrahydrodipicolinate. The chain is 4-hydroxy-tetrahydrodipicolinate reductase from Mastigocladus laminosus (Fischerella sp.).